A 336-amino-acid polypeptide reads, in one-letter code: Tryptophan--tRNA ligase (336 aa).

ATP is bound by residues 16 to 18 and 24 to 25; these read QPT and GN. Residues 17–25 carry the 'HIGH' region motif; sequence PTGQLHLGN. L-tryptophan is bound at residue aspartate 140. Residues 152-154, valine 191, and 200-204 each bind ATP; these read GED and KMSKS. The 'KMSKS' region motif lies at 200–204; the sequence is KMSKS.

It belongs to the class-I aminoacyl-tRNA synthetase family. Homodimer.

It is found in the cytoplasm. It catalyses the reaction tRNA(Trp) + L-tryptophan + ATP = L-tryptophyl-tRNA(Trp) + AMP + diphosphate + H(+). Functionally, catalyzes the attachment of tryptophan to tRNA(Trp). This is Tryptophan--tRNA ligase from Gloeobacter violaceus (strain ATCC 29082 / PCC 7421).